The primary structure comprises 95 residues: Citrate lyase acyl carrier protein (95 aa).

Ser14 is subject to O-(phosphoribosyl dephospho-coenzyme A)serine.

Belongs to the CitD family. As to quaternary structure, oligomer with a subunit composition of (alpha,beta,gamma)6.

The protein localises to the cytoplasm. Functionally, covalent carrier of the coenzyme of citrate lyase. The chain is Citrate lyase acyl carrier protein from Haemophilus influenzae (strain 86-028NP).